Reading from the N-terminus, the 331-residue chain is Cytosolic arginine sensor for mTORC1 subunit 1 (331 aa).

Ser-14 is modified (phosphoserine). ACT domains are found at residues 72–137 (AEAT…HTLA) and 259–320 (GELW…DILQ). L-arginine is bound by residues 110 to 111 (SV), Gly-273, 279 to 280 (IV), and 299 to 303 (TFNFD).

It belongs to the GATS family. As to quaternary structure, forms homodimers and heterodimers with CASTOR2. Interacts with the GATOR2 complex which is composed of MIOS, SEC13, SEH1L, WDR24 and WDR59; the interaction is negatively regulated by arginine. Interacts with TM4SF5; the interaction is positively regulated by leucine and is negatively regulated by arginine. In terms of processing, phosphorylation at Ser-14 by AKT1, promoting the interaction between CASTOR1 and RNF167. Post-translationally, ubiquitinated by RNF167 via 'Lys-29'-polyubiquitination, leading to its degradation, releasing the GATOR2 complex. Ubiquitination by RNF167 is promoted by phosphorylation at Ser-14 by AKT1.

It is found in the cytoplasm. Its subcellular location is the cytosol. Functionally, functions as an intracellular arginine sensor within the amino acid-sensing branch of the TORC1 signaling pathway. As a homodimer or a heterodimer with CASTOR2, binds and inhibits the GATOR subcomplex GATOR2 and thereby mTORC1. Binding of arginine to CASTOR1 allosterically disrupts the interaction of CASTOR1-containing dimers with GATOR2 which can in turn activate mTORC1 and the TORC1 signaling pathway. In Mus musculus (Mouse), this protein is Cytosolic arginine sensor for mTORC1 subunit 1.